The sequence spans 302 residues: MNLQVEVGGLKLKNPVMTASGTFGFGREYGEYIDLNQLGAIVVKGLTVNPKEGNPPPRVYETPCGMLNSVGLQNPGINAFIEKELPFLRDYDVAVIVNIAGETIEEFAYMAKKLDIDGVDGIEINVSCPNVKKGGMAFGINPEDIFNITKEVKKVTQKTVIVKLTPNVGDIGVCAKAAEDGGADAVSLINTIAGMAINIDTRTPVFKNVIAGLSGPAIKPIALRMVYEAARAVKIPVIGMGGISSFKDALEFMIAGAKAVAIGTCNFVNPNCTIEVIEGIKQYMVLNNIEDINEIIGSLKVD.

Residues serine 20 and lysine 44 to glycine 45 contribute to the FMN site. Residues lysine 44 and asparagine 68–leucine 72 contribute to the substrate site. Positions 98 and 125 each coordinate FMN. Asparagine 125 provides a ligand contact to substrate. Cysteine 128 (nucleophile) is an active-site residue. FMN is bound by residues lysine 163 and isoleucine 189. Substrate is bound at residue asparagine 190–threonine 191. Residues glycine 215, glycine 241–glycine 242, and glycine 263–threonine 264 each bind FMN.

It belongs to the dihydroorotate dehydrogenase family. Type 1 subfamily. As to quaternary structure, heterotetramer of 2 PyrK and 2 PyrD type B subunits. The cofactor is FMN.

It is found in the cytoplasm. The catalysed reaction is (S)-dihydroorotate + NAD(+) = orotate + NADH + H(+). The protein operates within pyrimidine metabolism; UMP biosynthesis via de novo pathway; orotate from (S)-dihydroorotate (NAD(+) route): step 1/1. Its function is as follows. Catalyzes the conversion of dihydroorotate to orotate with NAD(+) as electron acceptor. This Thermoanaerobacter pseudethanolicus (strain ATCC 33223 / 39E) (Clostridium thermohydrosulfuricum) protein is Dihydroorotate dehydrogenase B (NAD(+)), catalytic subunit (pyrD).